We begin with the raw amino-acid sequence, 636 residues long: ATP-dependent zinc metalloprotease FtsH (636 aa).

The Cytoplasmic segment spans residues 1 to 12; that stretch reads MKKLLENLSLWM. A helical membrane pass occupies residues 13–33; that stretch reads GIIILVTLLFGQVALNFGFGI. Residues 34-104 lie on the Periplasmic side of the membrane; sequence RNEKIQFSEF…VASGDSFLGL (71 aa). Residues 105–125 traverse the membrane as a helical segment; the sequence is LFNILISWFPMLLLIGVWIFF. Topologically, residues 126-636 are cytoplasmic; it reads MKQMQAGGNK…ESDLDTGDKE (511 aa). 197-204 is a binding site for ATP; it reads GPPGTGKT. His-419 serves as a coordination point for Zn(2+). The active site involves Glu-420. Zn(2+) contacts are provided by His-423 and Asp-497.

It in the central section; belongs to the AAA ATPase family. This sequence in the C-terminal section; belongs to the peptidase M41 family. As to quaternary structure, homohexamer. Zn(2+) is required as a cofactor.

The protein resides in the cell inner membrane. Its function is as follows. Acts as a processive, ATP-dependent zinc metallopeptidase for both cytoplasmic and membrane proteins. Plays a role in the quality control of integral membrane proteins. This chain is ATP-dependent zinc metalloprotease FtsH, found in Neorickettsia risticii (strain Illinois).